Reading from the N-terminus, the 551-residue chain is Glucan 1,4-alpha-maltotetraohydrolase (551 aa).

The N-terminal stretch at 1 to 21 is a signal peptide; it reads MSHILRAAVLAAVLLPFPALA. Residues Asp-22, Gln-23, His-34, Asp-37, and Glu-38 each contribute to the Ca(2+) site. 99–100 is a substrate binding site; it reads YF. A Ca(2+)-binding site is contributed by Asn-137. His-138 is a substrate binding site. Residues Cys-161 and Cys-171 are joined by a disulfide bond. The Ca(2+) site is built by Asp-172 and Asp-175. 177-181 contacts substrate; it reads FIGGE. Asp-183 contributes to the Ca(2+) binding site. Substrate is bound at residue Arg-212. The Nucleophile role is filled by Asp-214. Gly-218 lines the Ca(2+) pocket. Cys-237 and Cys-272 are oxidised to a cystine. The Proton donor role is filled by Glu-240. Substrate contacts are provided by His-314 and Gln-326. The 103-residue stretch at 449–551 folds into the CBM20 domain; that stretch reads GGEGGLVNVN…AAGASTSGSF (103 aa).

Belongs to the glycosyl hydrolase 13 family. Monomer. Requires Ca(2+) as cofactor.

It localises to the secreted. It carries out the reaction Hydrolysis of (1-&gt;4)-alpha-D-glucosidic linkages in amylaceous polysaccharides, to remove successive maltotetraose residues from the non-reducing chain ends.. It functions in the pathway glycan degradation; starch degradation. This Roseateles saccharophilus (Pseudomonas saccharophila) protein is Glucan 1,4-alpha-maltotetraohydrolase (mta).